The following is a 246-amino-acid chain: Endonuclease NucS (246 aa).

This sequence belongs to the NucS endonuclease family.

Its subcellular location is the cytoplasm. Cleaves both 3' and 5' ssDNA extremities of branched DNA structures. This is Endonuclease NucS from Corynebacterium urealyticum (strain ATCC 43042 / DSM 7109).